The chain runs to 159 residues: Sec-independent protein translocase protein TatB (159 aa).

Residues 1–21 (MIDIGLSKMALIGAVALIVIG) traverse the membrane as a helical segment.

This sequence belongs to the TatB family. As to quaternary structure, the Tat system comprises two distinct complexes: a TatABC complex, containing multiple copies of TatA, TatB and TatC subunits, and a separate TatA complex, containing only TatA subunits. Substrates initially bind to the TatABC complex, which probably triggers association of the separate TatA complex to form the active translocon.

Its subcellular location is the cell inner membrane. Functionally, part of the twin-arginine translocation (Tat) system that transports large folded proteins containing a characteristic twin-arginine motif in their signal peptide across membranes. Together with TatC, TatB is part of a receptor directly interacting with Tat signal peptides. TatB may form an oligomeric binding site that transiently accommodates folded Tat precursor proteins before their translocation. This is Sec-independent protein translocase protein TatB from Acidovorax sp. (strain JS42).